The sequence spans 185 residues: Ribosome-recycling factor (185 aa).

The protein belongs to the RRF family.

It is found in the cytoplasm. In terms of biological role, responsible for the release of ribosomes from messenger RNA at the termination of protein biosynthesis. May increase the efficiency of translation by recycling ribosomes from one round of translation to another. The sequence is that of Ribosome-recycling factor from Shewanella halifaxensis (strain HAW-EB4).